The following is a 620-amino-acid chain: Aspartic protease 1 (620 aa).

Residues 1–110 (MSPSSRFRNL…LGKAVGLSTS (110 aa)) lie on the Cytoplasmic side of the membrane. Residues 1–258 (MSPSSRFRNL…SKKDDGNLSG (258 aa)) constitute a propeptide that is removed on maturation. Residues 27 to 31 (YASLL) are important for proper cellular trafficking. Residues 111-131 (VICVVALFGIVCLCLYGLVNF) traverse the membrane as a helical; Signal-anchor for type II membrane protein segment. The Lumenal segment spans residues 132 to 620 (SFTSVETSPL…KQIGFARLKN (489 aa)). Residues 138–174 (TSPLDDPRNSPVMGELGNPQASTPSSARADTPARHDR) are disordered. Residues 156 to 165 (PQASTPSSAR) show a composition bias toward polar residues. The Peptidase A1 domain occupies 275 to 616 (YYTEIYVGSP…DYDNKQIGFA (342 aa)). Active-site residues include D293 and D476. A disulfide bridge connects residues C513 and C550.

It belongs to the peptidase A1 family. Proteolytically cleaved into the soluble active mature form by, at least, cysteine protease CPL. Undergoes at least four processing steps; the first cleavage removes the propeptide resulting in the production of a soluble 45 kDa protein, which is further processed into a 35 kDa form followed by an additional processing into the final active 30 kDa form.

The protein resides in the membrane. Its subcellular location is the vacuole. Its function is as follows. Aspartyl protease which is dispensable for protein degradation in the vacuolar compartment (VAC) or for tachyzoite and bradyzoite viability. The protein is Aspartic protease 1 of Toxoplasma gondii.